The primary structure comprises 247 residues: Fasciclin-like arabinogalactan protein 6 (247 aa).

The N-terminal stretch at 1–23 (MSSSLFSYVVLLIFLFTIPYIQS) is a signal peptide. Residues 36–182 (PINLTAILEA…LAVYVVDSVL (147 aa)) form the FAS1 domain. Residues Asn38, Asn57, Asn70, Asn142, and Asn153 are each glycosylated (N-linked (GlcNAc...) asparagine). Positions 192-212 (TTPTGAPAPKSSTSSSDADSP) are enriched in low complexity. The tract at residues 192–221 (TTPTGAPAPKSSTSSSDADSPAADDEHKSA) is disordered. Gly222 is lipidated: GPI-anchor amidated glycine. Positions 223-247 (SSVKRTSLGIVVSFALFCCSVIYIA) are cleaved as a propeptide — removed in mature form.

It belongs to the fasciclin-like AGP family.

It localises to the cell membrane. May be a cell surface adhesion protein. The protein is Fasciclin-like arabinogalactan protein 6 (FLA6) of Arabidopsis thaliana (Mouse-ear cress).